An 876-amino-acid chain; its full sequence is Alanine--tRNA ligase (876 aa).

Residues histidine 564, histidine 568, cysteine 666, and histidine 670 each contribute to the Zn(2+) site.

It belongs to the class-II aminoacyl-tRNA synthetase family. Homotetramer. Zn(2+) serves as cofactor.

It localises to the cytoplasm. It carries out the reaction tRNA(Ala) + L-alanine + ATP = L-alanyl-tRNA(Ala) + AMP + diphosphate. Its function is as follows. Catalyzes the attachment of alanine to tRNA(Ala) in a two-step reaction: alanine is first activated by ATP to form Ala-AMP and then transferred to the acceptor end of tRNA(Ala). Also edits incorrectly charged Ser-tRNA(Ala) and Gly-tRNA(Ala) via its editing domain. The polypeptide is Alanine--tRNA ligase (Salmonella typhi).